The primary structure comprises 250 residues: Ditrans,polycis-undecaprenyl-diphosphate synthase ((2E,6E)-farnesyl-diphosphate specific) (250 aa).

Residue Asp20 is part of the active site. Asp20 is a Mg(2+) binding site. Residues 21–24 (GNGR), Trp25, Arg33, His37, and 65–67 (SSE) contribute to the substrate site. Asn68 serves as the catalytic Proton acceptor. Residues Trp69, Arg71, Arg188, and 194–196 (RIS) contribute to the substrate site. Glu207 contacts Mg(2+).

Belongs to the UPP synthase family. Homodimer. It depends on Mg(2+) as a cofactor.

The catalysed reaction is 8 isopentenyl diphosphate + (2E,6E)-farnesyl diphosphate = di-trans,octa-cis-undecaprenyl diphosphate + 8 diphosphate. Its function is as follows. Catalyzes the sequential condensation of isopentenyl diphosphate (IPP) with (2E,6E)-farnesyl diphosphate (E,E-FPP) to yield (2Z,6Z,10Z,14Z,18Z,22Z,26Z,30Z,34E,38E)-undecaprenyl diphosphate (di-trans,octa-cis-UPP). UPP is the precursor of glycosyl carrier lipid in the biosynthesis of bacterial cell wall polysaccharide components such as peptidoglycan and lipopolysaccharide. The sequence is that of Ditrans,polycis-undecaprenyl-diphosphate synthase ((2E,6E)-farnesyl-diphosphate specific) from Vibrio cholerae serotype O1 (strain ATCC 39315 / El Tor Inaba N16961).